A 609-amino-acid polypeptide reads, in one-letter code: Adagio protein 1 (609 aa).

Low complexity predominate over residues 1 to 17 (MEWDSGSDLSADDASSL). Residues 1 to 24 (MEWDSGSDLSADDASSLADDEEGG) form a disordered region. In terms of domain architecture, PAS spans 32–114 (IPYPVGNLLH…SEIRKCIDEG (83 aa)). S-4a-FMN cysteine is present on Cys-82. The 44-residue stretch at 118–161 (QGELLNFRKDGSPLMNRLRLTPIYGDDDTITHIIGIQFFIETDI) folds into the PAC domain. Residues 195–241 (CGLFQLSDEVVSMKILSRLTPRDVASVSSVCRRLYVLTKNEDLWRRV) enclose the F-box domain. 5 Kelch repeats span residues 292–342 (SRCN…SSPP), 345–392 (RWGH…SGLA), 397–445 (RSWH…PAAW), 450–501 (RLGH…TGSG), and 516–564 (RLDH…NIPG).

The protein belongs to the ADAGIO family. Interacts with NFXL2. Interacts (via N-terminus) with GI and (via Kelch repeats) with ADO3. Component of an E3 ubiquitin ligase SCF(ADO1) complex composed of SKP1A/ASK1 (or SKP1B/ASK2), CUL1, RBX1 and ADO1. Also interacts with SKP1D/ASK4, SKP1K/ASK11, CRY1, PHYB, APRR1 and APRR5, and probably with SKP1N/ASK14 and SKP1S/ASK19. Post-translationally, may be ubiquitinated. Degraded in a proteasome-dependent manner. In terms of processing, FMN binds covalently to cysteine after exposure to blue light and is reversed in the dark. As to expression, ubiquitously expressed with higher levels in cotyledons and leaves.

Its subcellular location is the nucleus. The protein localises to the cytoplasm. It functions in the pathway protein modification; protein ubiquitination. Functionally, component of an E3 ubiquitin ligase complex that plays a central role in blue light-dependent circadian cycles. Acts as a blue light photoreceptor, due to the presence of FMN, that mediates light-regulated protein degradation of critical clock components by targeting them to the proteasome complex. The SCF(ADO1) E3 ubiquitin ligase complex is involved in the regulation of circadian clock-dependent processes including the transition to flowering time, hypocotyl elongation, cotyledons and leaf movement rhythms. APRR1/TOC1 and APRR5, but not 'GIGANTEA', are proteolytic substrates of this ubiquitin ligase complex. Blue light enhances cooperative stabilization of 'GIGANTEA' and ADO1/ZTL, leading to amplification and sharpening of the expression profile of APRR1/TOC1. ADO1/ZTL interacts with ADO3, preventing the interaction of ADO3 with CDF1. This Arabidopsis thaliana (Mouse-ear cress) protein is Adagio protein 1 (ADO1).